The following is a 147-amino-acid chain: MARPKKCRRIEFIPKNTYFMPIGKKRCKIEEIKLRLEELEAMRLKDIEGLNQEECAERMQVSRQTFQNIIDSARKKVALALTKGSAINISGGDYTTHHCKFKCLDCEEVYNINYEQDRQKCPSCGSQNVICIKKMGSCNKKCHKDND.

This sequence belongs to the UPF0251 family.

The protein is UPF0251 protein NT01CX_1491 of Clostridium novyi (strain NT).